We begin with the raw amino-acid sequence, 1056 residues long: Pleckstrin homology domain-containing family M member 1 (1056 aa).

The 143-residue stretch at 41–183 folds into the RUN domain; it reads TSEDGDANTM…LSFELSYKSA (143 aa). Disordered regions lie at residues 215–245, 277–303, and 360–422; these read QRKESLDSISHSSGSEDIEVHHSGHKIRRNQ, GSKSPDHCEEPMSCDSDLGTANAEDSD, and PAQA…QAHD. Position 219 is a phosphoserine (Ser-219). Over residues 389-404 the composition is skewed to polar residues; the sequence is PVESTSGQQPSSTVSE. 2 positions are modified to phosphoserine: Ser-432 and Ser-435. The tract at residues 451–483 is disordered; the sequence is SREQPLESASDHPIASYRGTPGSRPGLHRHFSQ. Ser-490 carries the post-translational modification Phosphoserine. The PH 1 domain maps to 534-625; sequence GLMKLGTVER…WLDRVREALQ (92 aa). Residues 632-638 carry the LIR motif; the sequence is EDEWVNV. The segment at 654–1056 is interaction with RAB7A; the sequence is CLSPSDLLSE…RKYQEQNIFA (403 aa). The 95-residue stretch at 683–777 folds into the PH 2 domain; that stretch reads DAIKESLLYL…WRDLVRKVLA (95 aa). Residues 986 to 1040 form a Phorbol-ester/DAG-type zinc finger; that stretch reads QHVYHCDLCTQRGFICQICQHHDIIFPFEFDTTVRCAECKTVFHQSCQAVVKKGC.

As to quaternary structure, interacts (via N- and C-terminus) with RAB7A (GTP-bound form). Simultaneously interacts with RAB7A and ARL8B; bringing about clustering and fusion of late endosomes and lysosomes. Interacts (via RUN domain) with ARL8B (GTP-bound form); the interaction is required for PLEKHM1 localization to lysosomes and for ARL8B function in delivery and degradation of endocytic and autophagic cargo in lysosomes. PLEKHM1 and PLEKHM2 compete for interaction with ARL8B. Interacts with ARL8A; the interaction is weaker than with ARL8B. Interacts with VPS41, VPS11, VPS18, VPS33A and VPS39; indicative for an association with the HOPS complex; the interactions with, at least, VPS41, VPS11, VPS18 and VPS33A require ARL8B. Interacts with GABARAP, GABARAPL, GABARAPL2, MAP1LC3A, MAP1LC3B and MAP1LC3C. Interacts with PAFAH1B. Interacts (via N- and C-terminus) with NDEL1. Interacts (via C-terminus) with MAP3K7. Interacts (via N- and C-terminus) with FAM98A. Interacts (via C-terminus) with DEF8; this interaction is weak but increased in a RAB7A-dependent manner. In colon carcinoma and breast carcinoma cells, it interacts with sialyl-lex-positive protein. (Microbial infection) Interacts with Salmonella typhimurium sifA. As to expression, expressed in placenta, liver, prostate, thymus, spleen, ovary, colon, colon carcinoma and peripheral blood lymphocytes (PBL). Weakly expressed in brain, lung, kidney, and testis. No expression in heart, skeletal muscle, pancreas and small intestine. Predominantly expressed in the breast carcinoma cell line MCF-7.

The protein resides in the autolysosome membrane. Its subcellular location is the endosome membrane. The protein localises to the late endosome membrane. It is found in the lysosome membrane. Acts as a multivalent adapter protein that regulates Rab7-dependent and HOPS complex-dependent fusion events in the endolysosomal system and couples autophagic and the endocytic trafficking pathways. Acts as a dual effector of RAB7A and ARL8B that simultaneously binds these GTPases, bringing about clustering and fusion of late endosomes and lysosomes. Required for late stages of endolysosomal maturation, facilitating both endocytosis-mediated degradation of growth factor receptors and autophagosome clearance. Interaction with Arl8b is a crucial factor in the terminal maturation of autophagosomes and to mediate autophagosome-lysosome fusion. Positively regulates lysosome peripheral distribution and ruffled border formation in osteoclasts. May be involved in negative regulation of endocytic transport from early endosome to late endosome/lysosome implicating its association with Rab7. May have a role in sialyl-lex-mediated transduction of apoptotic signals. Involved in bone resorption. Functionally, (Microbial infection) In case of infection contributes to Salmonella typhimurium pathogenesis by supporting the integrity of the Salmonella-containing vacuole (SCV) probably in concert with the HOPS complex and Rab7. The sequence is that of Pleckstrin homology domain-containing family M member 1 from Homo sapiens (Human).